The chain runs to 780 residues: Cullin-5 (780 aa).

Phosphoserine is present on S34. T210 is subject to Phosphothreonine. The Cullin neddylation domain maps to 711–772; the sequence is RILRTQEAII…HKYIRRDEAD (62 aa). K724 participates in a covalent cross-link: Glycyl lysine isopeptide (Lys-Gly) (interchain with G-Cter in NEDD8).

Belongs to the cullin family. In terms of assembly, component of multiple cullin-5-RING E3 ubiquitin-protein ligase complexes (ECS complexes, also named CRL5 complexes) formed of CUL5, Elongin BC (ELOB and ELOC), RNF7/RBX2 and a variable SOCS box domain-containing protein as substrate-specific recognition component. CUL5-containing ECS complexes specifically contain RNF7/RBX2, and not RBX1, as catalytic subunit. Component of the ECS(ASB2) complex with the substrate recognition component ASB2. Component of the ECS(ASB6) complex with the substrate recognition component ASB6. Component of the ECS(ASB7) complex with the substrate recognition component ASB7. Component of the ECS(ASB9) complex with the substrate recognition component ASB9. Component of the ECS(ASB11) complex with the substrate recognition component ASB11. Component of the ECS(ASB12) complex with the substrate recognition component ASB12. Component of the ECS(LRRC41) complex with the substrate recognition component LRRC41. Component of the ECS(SOCS1) complex with the substrate recognition component SOCS1. Component of the ECS(SOCS2) complex with the substrate recognition component SOCS2. Component of the ECS(WSB1) complex with the substrate recognition subunit WSB1. Component of the ECS(SOCS3) complex with the substrate recognition component SOCS3. Component of the ECS(SOCS7) complex with the substrate recognition component SOCS7. Component of the ECS(SPSB1) complex with the substrate recognition component SPSB1. Component of the ECS(SPSB3) complex with the substrate recognition component SPSB3. Component of the ECS(SPSB2) complex with the substrate recognition component SPSB2. Component of the ECS(SPSB4) complex with the substrate recognition component SPSB4. Component of the ECS(RAB40) complex with the substrate recognition subunit RAB40A, RAB40B or RAB40C. Component of the ECS(KLHDC1) complex with the substrate recognition component KLHDC1. Component of the ECS(PCMTD1) complex with the substrate recognition subunit PCMTD1. May also form complexes containing RBX1 and ELOA or VHL; additional evidence is however required to confirm this result in vivo. Interacts (when neddylated) with ARIH2; leading to activate the E3 ligase activity of ARIH2. Interacts with ERCC6; the interaction is induced by DNA damaging agents or inhibitors of RNA polymerase II elongation. Interacts with ELOA (via the BC-box). Interacts (unneddylated form) with DCUN1D1, DCUN1D2, DCUN1D3, DCUN1D4 and DCUN1D5; these interactions promote the cullin neddylation. Post-translationally, neddylated; which enhances the ubiquitination activity of ECS complexes and prevents binding of the inhibitor CAND1. Deneddylated via its interaction with the COP9 signalosome (CSN).

It localises to the nucleus. It participates in protein modification; protein ubiquitination. Its function is as follows. Core component of multiple cullin-5-RING E3 ubiquitin-protein ligase complexes (ECS complexes, also named CRL5 complexes), which mediate the ubiquitination and subsequent proteasomal degradation of target proteins. Acts a scaffold protein that contributes to catalysis through positioning of the substrate and the ubiquitin-conjugating enzyme. The functional specificity of the E3 ubiquitin-protein ligase complex depends on the variable SOCS box-containing substrate recognition component. Acts as a key regulator of neuron positioning during cortex development: component of various SOCS-containing ECS complexes, such as the ECS(SOCS7) complex, that regulate reelin signaling by mediating ubiquitination and degradation of DAB1. ECS(SOCS1) seems to direct ubiquitination of JAK2. The ECS(SOCS2) complex mediates the ubiquitination and subsequent proteasomal degradation of phosphorylated EPOR and GHR. The ECS(SPSB3) complex catalyzes ubiquitination of nuclear CGAS. ECS(KLHDC1) complex is part of the DesCEND (destruction via C-end degrons) pathway and mediates ubiquitination and degradation of truncated SELENOS selenoprotein produced by failed UGA/Sec decoding, which ends with a glycine. The ECS(ASB9) complex mediates ubiquitination and degradation of CKB. As part of some ECS complex, promotes 'Lys-11'-linked ubiquitination and degradation of BTRC. As part of a multisubunit ECS complex, polyubiquitinates monoubiquitinated POLR2A. As part of the ECS(RAB40C) complex, mediates ANKRD28 ubiquitination and degradation, thereby regulating protein phosphatase 6 (PP6) complex activity and focal adhesion assembly during cell migration. As part of the ECS(RAB40A) complex, mediates RHOU 'Lys-48'-linked ubiquitination and degradation, thus inhibiting focal adhesion disassembly during cell migration. As part of the ECS(RAB40B) complex, mediates LIMA1/EPLIN and RAP2 ubiquitination, thereby regulating actin cytoskeleton dynamics and stress fiber formation during cell migration. May form a cell surface vasopressin receptor. This is Cullin-5 from Rattus norvegicus (Rat).